A 64-amino-acid polypeptide reads, in one-letter code: Large ribosomal subunit protein bL35 (64 aa).

This sequence belongs to the bacterial ribosomal protein bL35 family.

In Shewanella frigidimarina (strain NCIMB 400), this protein is Large ribosomal subunit protein bL35.